A 494-amino-acid polypeptide reads, in one-letter code: Beta-glucosidase 29 (494 aa).

The N-terminal stretch at 1-28 (MAWLGIGMGRQIVPVLVFVAVLCSGVDA) is a signal peptide. Gln-49 contacts a beta-D-glucoside. Residue Asn-103 is glycosylated (N-linked (GlcNAc...) asparagine). A beta-D-glucoside is bound by residues His-138 and 183–184 (NE). Catalysis depends on Glu-184, which acts as the Proton donor. Cys-203 and Cys-211 form a disulfide bridge. Asn-263 carries an N-linked (GlcNAc...) asparagine glycan. Tyr-327 is a binding site for a beta-D-glucoside. A glycan (N-linked (GlcNAc...) asparagine) is linked at Asn-352. An a beta-D-glucoside-binding site is contributed by Glu-398. Glu-398 acts as the Nucleophile in catalysis. N-linked (GlcNAc...) asparagine glycosylation occurs at Asn-406. A beta-D-glucoside contacts are provided by residues Trp-447, 454–455 (EW), and Phe-463.

Belongs to the glycosyl hydrolase 1 family.

The enzyme catalyses Hydrolysis of terminal, non-reducing beta-D-glucosyl residues with release of beta-D-glucose.. The chain is Beta-glucosidase 29 (BGLU29) from Oryza sativa subsp. japonica (Rice).